The primary structure comprises 804 residues: Endoplasmin (804 aa).

The signal sequence occupies residues 1–21 (MRVLWVLGLCCVLLTFGFVRA). An SRT pseudosubstrate motif motif is present at residues 42-44 (SRT). N62 carries N-linked (GlcNAc...) asparagine glycosylation. S64 carries the phosphoserine modification. The N-linked (GlcNAc...) asparagine glycan is linked to N107. 3 residues coordinate ATP: N107, D149, and N162. K168 carries the post-translational modification N6-(2-hydroxyisobutyryl)lysine. Phosphoserine is present on S172. Residue F199 coordinates ATP. N217 carries an N-linked (GlcNAc...) asparagine glycan. Residues 288-323 (TVEEPLEEDETAQEEKEEADDEAAVEEEEEEKKPKT) are disordered. Residues 289–317 (VEEPLEEDETAQEEKEEADDEAAVEEEEE) are compositionally biased toward acidic residues. Position 403 is a phosphoserine (S403). An N6-succinyllysine modification is found at K404. N445 carries N-linked (GlcNAc...) asparagine glycosylation. S447 is subject to Phosphoserine. At K479 the chain carries N6-acetyllysine. N-linked (GlcNAc...) asparagine glycosylation is found at N481 and N502. Position 633 is an N6-succinyllysine (K633). Residues 749-804 (IDPEAQVEEEPEEEPEDTTEDTTDDSEQDEEETDAGAEEEEEEQETEKEPTEKDEL) form a disordered region. Residues 753-794 (AQVEEEPEEEPEDTTEDTTDDSEQDEEETDAGAEEEEEEQET) are compositionally biased toward acidic residues. Over residues 795–804 (EKEPTEKDEL) the composition is skewed to basic and acidic residues. The short motif at 801–804 (KDEL) is the Prevents secretion from ER element.

This sequence belongs to the heat shock protein 90 family. Homodimer; disulfide-linked. Component of an EIF2 complex at least composed of CELF1/CUGBP1, CALR, CALR3, EIF2S1, EIF2S2, HSP90B1 and HSPA5. Part of a large chaperone multiprotein complex comprising DNAJB11, HSP90B1, HSPA5, HYOU, PDIA2, PDIA4, PDIA6, PPIB, SDF2L1, UGGT1 and very small amounts of ERP29, but not, or at very low levels, CALR nor CANX. Interacts with AIMP1; regulates its retention in the endoplasmic reticulum. Hyperglycosylated form interacts with OS9; promoting its degradation by the endoplasmic reticulum associated degradation (ERAD). Interacts with CNPY3. This interaction is disrupted in the presence of ATP. Interacts with TLR4 and TLR9, but not with TLR3. Interacts with MZB1 in a calcium-dependent manner. Interacts with METTL23. Interacts with IL1B; the interaction facilitates cargo translocation into the ERGIC. Interacts with EIF2AK3. Phosphorylated by CK2. Post-translationally, N-glycosylated cotranslationally at Asn-217 by STT3A-containing OST-A complex: this glycosylation is constitutive. In response to various stress, 5 additional facultative sites (Asn-62, Asn-107, Asn-445, Asn-481 and Asn-502) can be glycosylated post-translationally by STT3B-containing OST-B complex, leading to a hyperglycosylated form that is degraded by the ER-associated degradation (ERAD) pathway. In normal conditions, the OST-A complex together with CCDC134 prevent glycosylation at facultative sites during protein folding, thereby preventing hyperglycosylation. Mechanistically, nascent HSP90B1 is tethered during translation to a specialized CCDC134-containing translocon that forms a microenvironment for its folding, in which STT3A associates with the SRT pseudosubstrate motif, and prevents access to facultative glycosylation sites until folding is completed, rendering its facultative sites inaccessible to the OST-B complex.

It is found in the endoplasmic reticulum lumen. The protein localises to the sarcoplasmic reticulum lumen. The protein resides in the melanosome. It carries out the reaction ATP + H2O = ADP + phosphate + H(+). In terms of biological role, ATP-dependent chaperone involved in the processing of proteins in the endoplasmic reticulum, regulating their transport. Together with MESD, acts as a modulator of the Wnt pathway by promoting the folding of LRP6, a coreceptor of the canonical Wnt pathway. When associated with CNPY3, required for proper folding of Toll-like receptors. Promotes folding and trafficking of TLR4 to the cell surface. May participate in the unfolding of cytosolic leaderless cargos (lacking the secretion signal sequence) such as the interleukin 1/IL-1 to facilitate their translocation into the ERGIC (endoplasmic reticulum-Golgi intermediate compartment) and secretion; the translocation process is mediated by the cargo receptor TMED10. This is Endoplasmin from Rattus norvegicus (Rat).